We begin with the raw amino-acid sequence, 231 residues long: Ion-translocating oxidoreductase complex subunit E (231 aa).

6 consecutive transmembrane segments (helical) span residues 18-38 (ALVQLLGLCPLLAVTSTATNA), 39-59 (LGLGLATTLVLTLTNLTISTL), 63-83 (TPAEIRIPIYVMIIASVVSAV), 86-106 (LINAYAFGLYQSLGIFIPLIV), 125-145 (ALSALDGFSIGMGATCAMFVL), and 182-202 (PFLLAMLPPGAFIGLGLMLAG).

The protein belongs to the NqrDE/RnfAE family. As to quaternary structure, the complex is composed of six subunits: RsxA, RsxB, RsxC, RsxD, RsxE and RsxG.

The protein resides in the cell inner membrane. Part of a membrane-bound complex that couples electron transfer with translocation of ions across the membrane. Required to maintain the reduced state of SoxR. This chain is Ion-translocating oxidoreductase complex subunit E, found in Escherichia coli O1:K1 / APEC.